The following is a 454-amino-acid chain: tRNA modification GTPase MnmE (454 aa).

(6S)-5-formyl-5,6,7,8-tetrahydrofolate is bound by residues Arg-23, Glu-80, and Lys-120. Residues 216–377 form the TrmE-type G domain; that stretch reads GMKVVIAGRP…LRNHLKQSMG (162 aa). Asn-226 is a binding site for K(+). GTP is bound by residues 226 to 231, 245 to 251, 270 to 273, 335 to 338, and 358 to 360; these read NAGKSS, TDIAGTT, DTAG, NKAD, and SAR. Ser-230 contributes to the Mg(2+) binding site. The K(+) site is built by Thr-245, Ile-247, and Thr-250. Thr-251 serves as a coordination point for Mg(2+). (6S)-5-formyl-5,6,7,8-tetrahydrofolate is bound at residue Lys-454.

The protein belongs to the TRAFAC class TrmE-Era-EngA-EngB-Septin-like GTPase superfamily. TrmE GTPase family. As to quaternary structure, homodimer. Heterotetramer of two MnmE and two MnmG subunits. Requires K(+) as cofactor.

It is found in the cytoplasm. In terms of biological role, exhibits a very high intrinsic GTPase hydrolysis rate. Involved in the addition of a carboxymethylaminomethyl (cmnm) group at the wobble position (U34) of certain tRNAs, forming tRNA-cmnm(5)s(2)U34. This is tRNA modification GTPase MnmE from Escherichia coli (strain 55989 / EAEC).